A 183-amino-acid chain; its full sequence is Shikimate kinase (183 aa).

ATP is bound at residue Gly-19–Thr-24. A Mg(2+)-binding site is contributed by Thr-23. Substrate contacts are provided by Asp-41, Arg-65, and Gly-87. Arg-124 contacts ATP. Arg-143 lines the substrate pocket.

This sequence belongs to the shikimate kinase family. Monomer. Mg(2+) serves as cofactor.

The protein resides in the cytoplasm. It carries out the reaction shikimate + ATP = 3-phosphoshikimate + ADP + H(+). Its pathway is metabolic intermediate biosynthesis; chorismate biosynthesis; chorismate from D-erythrose 4-phosphate and phosphoenolpyruvate: step 5/7. Catalyzes the specific phosphorylation of the 3-hydroxyl group of shikimic acid using ATP as a cosubstrate. This chain is Shikimate kinase, found in Thermosynechococcus vestitus (strain NIES-2133 / IAM M-273 / BP-1).